A 415-amino-acid chain; its full sequence is MKFPWLLLVKGAASVAAQKPLATSGSGQVLGTFNLEDIINASPLLSFHRDIVKIPSTTDNEYEVGQFIGDFLEQKHFTVEKQSISDSRFNVYAYQGNNSLPDILVTSHIDTVPPFLPYNLDYPILGGGHEFDRQSVLIAGRGTVDAKGSVAAQIFAVLEILEEKPDASIGLLFVVGEEKGGIGMETFSKNPSPSSFHTVIFGEPTGLNLVSGHKGVIGFNIKATGRAAHSGYPWLGKNAISALLPVASFTERLGEIPFQDGGLPSSLKYGNSTVNLGVIQGGVAVNVVPDSAEAIFSVRVAAGTPDESKSIITREVNKFTKNDPNIEVAFYPGGLSPTDLDTDVEGFDIITVNYGTDVPKLAIHGGGDRVVKRYLYGPGSILVAHGEDEALTVGDLEGAVQGYRVLIEKALSRDV.

A signal peptide spans methionine 1–alanine 17. N-linked (GlcNAc...) asparagine glycosylation occurs at asparagine 97. Aspartate 145 is a Zn(2+) binding site. The active-site Proton acceptor is the glutamate 177. Residue glutamate 178 participates in Zn(2+) binding. N-linked (GlcNAc...) asparagine glycosylation is present at asparagine 271.

The protein belongs to the peptidase M20A family. The cofactor is Zn(2+).

It localises to the secreted. The chain is Probable carboxypeptidase ACLA_013260 from Aspergillus clavatus (strain ATCC 1007 / CBS 513.65 / DSM 816 / NCTC 3887 / NRRL 1 / QM 1276 / 107).